The primary structure comprises 166 residues: ATP synthase subunit b (166 aa).

A helical membrane pass occupies residues 15–37 (TLYYLLIFAALLLLVKHFAWGPV).

Belongs to the ATPase B chain family. F-type ATPases have 2 components, F(1) - the catalytic core - and F(0) - the membrane proton channel. F(1) has five subunits: alpha(3), beta(3), gamma(1), delta(1), epsilon(1). F(0) has three main subunits: a(1), b(2) and c(10-14). The alpha and beta chains form an alternating ring which encloses part of the gamma chain. F(1) is attached to F(0) by a central stalk formed by the gamma and epsilon chains, while a peripheral stalk is formed by the delta and b chains.

The protein localises to the cell membrane. Its function is as follows. F(1)F(0) ATP synthase produces ATP from ADP in the presence of a proton or sodium gradient. F-type ATPases consist of two structural domains, F(1) containing the extramembraneous catalytic core and F(0) containing the membrane proton channel, linked together by a central stalk and a peripheral stalk. During catalysis, ATP synthesis in the catalytic domain of F(1) is coupled via a rotary mechanism of the central stalk subunits to proton translocation. Component of the F(0) channel, it forms part of the peripheral stalk, linking F(1) to F(0). This Lactobacillus gasseri (strain ATCC 33323 / DSM 20243 / BCRC 14619 / CIP 102991 / JCM 1131 / KCTC 3163 / NCIMB 11718 / NCTC 13722 / AM63) protein is ATP synthase subunit b.